A 403-amino-acid chain; its full sequence is Basic leucine zipper 25 (403 aa).

Disordered regions lie at residues 13-128 (SFWP…APVV) and 156-259 (VKPE…EFDT). Positions 24-33 (PGSSSTPSPT) are enriched in low complexity. Over residues 56–69 (LSGSDSSPTTNTIE) the composition is skewed to polar residues. Low complexity-rich tracts occupy residues 115-128 (APSS…APVV) and 161-174 (SSAS…AQGS). The span at 175 to 195 (IVAQTSPGASSVRFSPTTSTQ) shows a compositional bias: polar residues. The segment covering 212 to 226 (DSDDDDLDGDADNGD) has biased composition (acidic residues). Phosphoserine is present on S213. One can recognise a bZIP domain in the interval 229–292 (DVKRARRMLS…DAAAVDNRIL (64 aa)). The basic motif stretch occupies residues 231 to 250 (KRARRMLSNRESARRSRRRK). The Nuclear localization signal signature appears at 233 to 240 (ARRMLSNR). The interval 264–271 (LRAEHSTL) is leucine-zipper. Over residues 332 to 345 (NTPSASSSIPPNSN) the composition is skewed to low complexity. Disordered regions lie at residues 332–361 (NTPS…SAGL) and 380–403 (EGMQ…NHKH). Residues 351–361 (ANSSTNTSAGL) show a composition bias toward polar residues.

It belongs to the bZIP family. In terms of assembly, homodimer. Forms a heterodimer with BZIP1, BZIP1, BZIP2, BZIP9, BZIP11, BZIP44, BZIP53 and BZIP63. Interacts with ABI3 and forms a complex made of ABI3, BZIP53 and BZIP25. Expressed in roots, shoots, stems, leaves, stipulae, siliques, seeds, pollen, and flowers.

It is found in the nucleus. In terms of biological role, transcription factor that binds to the 5'-ACGT-3' box, especially present in G-box-like motif (5'-CCACGTGGCC-3'), ABRE elements, of seed storage protein (SSP) encoding gene promoters (e.g. At2S and CRU3) and promotes their expression in seeds when in complex with ABI3 and BZIP53. This is Basic leucine zipper 25 (BZIP25) from Arabidopsis thaliana (Mouse-ear cress).